The sequence spans 158 residues: MQGRLSAWLVKHGLVHRSLGFDYQGIETLQIKPEDWHSVAVILYIYGYNYLRSQCAYDVAPGGLLASVYHLTRIEYGVDQPEEVCIKVFAPRSNPKIPSVFWVWKSANFQERESYDMLGILYDNHPRLKRILMPESWIGWPLRKDYIAPNFYEIQDAY.

The protein belongs to the complex I 30 kDa subunit family. As to quaternary structure, NDH is composed of at least 16 different subunits, 5 of which are encoded in the nucleus.

Its subcellular location is the plastid. The protein localises to the chloroplast thylakoid membrane. The catalysed reaction is a plastoquinone + NADH + (n+1) H(+)(in) = a plastoquinol + NAD(+) + n H(+)(out). It catalyses the reaction a plastoquinone + NADPH + (n+1) H(+)(in) = a plastoquinol + NADP(+) + n H(+)(out). In terms of biological role, NDH shuttles electrons from NAD(P)H:plastoquinone, via FMN and iron-sulfur (Fe-S) centers, to quinones in the photosynthetic chain and possibly in a chloroplast respiratory chain. The immediate electron acceptor for the enzyme in this species is believed to be plastoquinone. Couples the redox reaction to proton translocation, and thus conserves the redox energy in a proton gradient. The protein is NAD(P)H-quinone oxidoreductase subunit J, chloroplastic of Citrus sinensis (Sweet orange).